The following is a 186-amino-acid chain: UPF0301 protein LHK_02881 (186 aa).

This sequence belongs to the UPF0301 (AlgH) family.

The polypeptide is UPF0301 protein LHK_02881 (Laribacter hongkongensis (strain HLHK9)).